A 361-amino-acid chain; its full sequence is UDP-N-acetylglucosamine--N-acetylmuramyl-(pentapeptide) pyrophosphoryl-undecaprenol N-acetylglucosamine transferase (361 aa).

UDP-N-acetyl-alpha-D-glucosamine-binding positions include 13-15 (TGG), Asn-125, Arg-167, Ser-196, Ile-251, 270-275 (ALTVTE), and Gln-296.

Belongs to the glycosyltransferase 28 family. MurG subfamily.

It is found in the cell inner membrane. It carries out the reaction di-trans,octa-cis-undecaprenyl diphospho-N-acetyl-alpha-D-muramoyl-L-alanyl-D-glutamyl-meso-2,6-diaminopimeloyl-D-alanyl-D-alanine + UDP-N-acetyl-alpha-D-glucosamine = di-trans,octa-cis-undecaprenyl diphospho-[N-acetyl-alpha-D-glucosaminyl-(1-&gt;4)]-N-acetyl-alpha-D-muramoyl-L-alanyl-D-glutamyl-meso-2,6-diaminopimeloyl-D-alanyl-D-alanine + UDP + H(+). Its pathway is cell wall biogenesis; peptidoglycan biosynthesis. Functionally, cell wall formation. Catalyzes the transfer of a GlcNAc subunit on undecaprenyl-pyrophosphoryl-MurNAc-pentapeptide (lipid intermediate I) to form undecaprenyl-pyrophosphoryl-MurNAc-(pentapeptide)GlcNAc (lipid intermediate II). The sequence is that of UDP-N-acetylglucosamine--N-acetylmuramyl-(pentapeptide) pyrophosphoryl-undecaprenol N-acetylglucosamine transferase from Psychrobacter arcticus (strain DSM 17307 / VKM B-2377 / 273-4).